The primary structure comprises 263 residues: Lens fiber major intrinsic protein (263 aa).

The Cytoplasmic segment spans residues 1–9 (MWELRSASF). Residues 10 to 29 (WRAIFAEFFATLFYVFFGLG) form a helical membrane-spanning segment. The Extracellular segment spans residues 30-41 (ASLRWAPGPLHV). Residues 42–59 (LQVALAFGLALAXLVQTV) traverse the membrane as a helical segment. Over 60–61 (GH) the chain is Cytoplasmic. The segment at residues 62–77 (ISGAHVNPAVTFXFLV) is an intramembrane region (discontinuously helical). Residues 68–70 (NPA) carry the NPA 1 motif. At 78 to 82 (GSQMS) the chain is on the cytoplasmic side. The chain crosses the membrane as a helical span at residues 83–106 (LLRAFCYMAAQLLGAVAGAAVLYS). Topologically, residues 107-127 (VTPPAVRGNLALNTLHAGVSV) are extracellular. A helical membrane pass occupies residues 128–148 (XQATTVEIFLTLQFVLCIFAT). The Cytoplasmic segment spans residues 149 to 156 (YDERRNGR). Residues 157 to 175 (LGSVALAVGFSLTLGHLFG) form a helical membrane-spanning segment. Residues 176–178 (MYY) are Extracellular-facing. Positions 179–193 (TGAGMNPARSFAPAI) form an intramembrane region, discontinuously helical. An NPA 2 motif is present at residues 184-186 (NPA). At 194 to 200 (LTRNFTN) the chain is on the extracellular side. The chain crosses the membrane as a helical span at residues 201 to 222 (HWVYWVGPIIGGGLGSLLYDFL). Residues 223-263 (LFPRLKSVSERLSILKGTRPSDNNGQPEGTGEPVELKTQAL) lie on the Cytoplasmic side of the membrane. The interval 227 to 237 (LKSVSERLSIL) is interaction with CALM. 2 positions are modified to phosphoserine: S235 and S243. The disordered stretch occupies residues 238 to 263 (KGTRPSDNNGQPEGTGEPVELKTQAL). Residues N245 and N246 each carry the deamidated asparagine; by deterioration modification.

This sequence belongs to the MIP/aquaporin (TC 1.A.8) family. In terms of assembly, homotetramer; each monomer provides an independent water pore. Two homotetramers on opposing membranes can dimerize, forming a cell-cell junction. Interacts with CALM; the calcium-calmodulin/CALM complex interacts with the cytoplasmic domains of two aquaporins, leading to channel closure. Interacts with BFSP1 (via C-terminus); prevents calcium-dependent inhibition of the water channel activity. Post-translationally, subject to partial proteolytic cleavage in the eye lens core. Partial proteolysis promotes interactions between tetramers from adjoining membranes. Fatty acylated at Met-1 and Lys-238. The acyl modifications, in decreasing order of ion abundance, are: oleoyl (C18:1) &gt; palmitoyl (C16:0) &gt; stearoyl (C18:0) &gt; eicosenoyl (C20:1) &gt; dihomo-gamma-linolenoyl (C20:3) &gt; palmitoleoyl (C16:1) &gt; eicosadienoyl (C20:2). In terms of tissue distribution, detected in eye lens (at protein level).

The protein localises to the cell membrane. Its subcellular location is the cell junction. The catalysed reaction is H2O(in) = H2O(out). With respect to regulation, the water channel activity is inhibited by calcium through calmodulin/CALM. Its function is as follows. Aquaporins form homotetrameric transmembrane channels, with each monomer independently mediating water transport across the plasma membrane along its osmotic gradient. Specifically expressed in lens fiber cells, this aquaporin is crucial for maintaining lens water homeostasis and transparency. Beyond water permeability, it also acts as a cell-to-cell adhesion molecule, forming thin junctions between lens fiber cells that are essential for maintaining the ordered structure and transparency of the lens. The chain is Lens fiber major intrinsic protein from Cavia porcellus (Guinea pig).